Reading from the N-terminus, the 146-residue chain is ATP synthase epsilon chain (146 aa).

It belongs to the ATPase epsilon chain family. F-type ATPases have 2 components, CF(1) - the catalytic core - and CF(0) - the membrane proton channel. CF(1) has five subunits: alpha(3), beta(3), gamma(1), delta(1), epsilon(1). CF(0) has three main subunits: a, b and c.

It is found in the cell membrane. In terms of biological role, produces ATP from ADP in the presence of a proton gradient across the membrane. The protein is ATP synthase epsilon chain of Lactobacillus delbrueckii subsp. bulgaricus (strain ATCC 11842 / DSM 20081 / BCRC 10696 / JCM 1002 / NBRC 13953 / NCIMB 11778 / NCTC 12712 / WDCM 00102 / Lb 14).